The chain runs to 619 residues: ATP-dependent zinc metalloprotease FtsH 1 (619 aa).

The Cytoplasmic segment spans residues 1-8; the sequence is MADEKRPA. Residues 9 to 29 traverse the membrane as a helical segment; sequence SRAWLGYLLIAVGILVLSGIV. The Periplasmic segment spans residues 30 to 108; it reads RSRGRPLVPY…RIEAKSPQTS (79 aa). The chain crosses the membrane as a helical span at residues 109-129; sequence VWMQVAIWMLPLVLINAAFFM. Residues 130 to 619 lie on the Cytoplasmic side of the membrane; that stretch reads MLRRAGQGAG…KIAVGPPSAA (490 aa). 203-210 contributes to the ATP binding site; sequence GPPGTGKT. His-426 serves as a coordination point for Zn(2+). Residue Glu-427 is part of the active site. 2 residues coordinate Zn(2+): His-430 and Asp-503.

The protein in the central section; belongs to the AAA ATPase family. It in the C-terminal section; belongs to the peptidase M41 family. As to quaternary structure, homohexamer. Zn(2+) is required as a cofactor.

It localises to the cell inner membrane. Acts as a processive, ATP-dependent zinc metallopeptidase for both cytoplasmic and membrane proteins. Plays a role in the quality control of integral membrane proteins. The sequence is that of ATP-dependent zinc metalloprotease FtsH 1 from Sorangium cellulosum (strain So ce56) (Polyangium cellulosum (strain So ce56)).